The chain runs to 782 residues: uncharacterized protein (782 aa).

Disordered stretches follow at residues 1-127 (MTTT…SAMK), 205-234 (NAAA…SYNP), and 308-355 (PYNF…SYLR). A compositionally biased stretch (basic and acidic residues) spans 24–54 (KPQEEPTMKDKALLFEKQRQEKKMKHTEAKM). Positions 82 to 118 (KNVNNATSTNNATSTKNNTKNTPKNTPKNIPKNTTAK) are enriched in low complexity. A compositionally biased stretch (polar residues) spans 312 to 324 (ARNNHGSDVSSAM). Positions 326–336 (NARRQASETRR) are enriched in basic and acidic residues. The segment covering 337–346 (SNLSSYNDRN) has biased composition (polar residues). A coiled-coil region spans residues 361 to 628 (MEKIRTEVDK…ERLRERLREL (268 aa)). Residues 629-668 (GSRDRSYNRSSRDRSHDRLYERSPRSRDRSSRDRSRDRYS) show a composition bias toward basic and acidic residues. The tract at residues 629 to 689 (GSRDRSYNRS…SDSVKDYSVG (61 aa)) is disordered. Over residues 669-678 (RSRSRSRYRR) the composition is skewed to basic residues. A compositionally biased stretch (basic and acidic residues) spans 679–689 (RSDSVKDYSVG).

This is an uncharacterized protein from Yarrowia lipolytica (strain CLIB 122 / E 150) (Yeast).